We begin with the raw amino-acid sequence, 209 residues long: ATP-dependent Clp protease proteolytic subunit (209 aa).

S111 acts as the Nucleophile in catalysis. H136 is an active-site residue.

This sequence belongs to the peptidase S14 family. As to quaternary structure, fourteen ClpP subunits assemble into 2 heptameric rings which stack back to back to give a disk-like structure with a central cavity, resembling the structure of eukaryotic proteasomes.

The protein resides in the cytoplasm. It catalyses the reaction Hydrolysis of proteins to small peptides in the presence of ATP and magnesium. alpha-casein is the usual test substrate. In the absence of ATP, only oligopeptides shorter than five residues are hydrolyzed (such as succinyl-Leu-Tyr-|-NHMec, and Leu-Tyr-Leu-|-Tyr-Trp, in which cleavage of the -Tyr-|-Leu- and -Tyr-|-Trp bonds also occurs).. Its function is as follows. Cleaves peptides in various proteins in a process that requires ATP hydrolysis. Has a chymotrypsin-like activity. Plays a major role in the degradation of misfolded proteins. The protein is ATP-dependent Clp protease proteolytic subunit of Dechloromonas aromatica (strain RCB).